The primary structure comprises 436 residues: Enolase (436 aa).

Glutamine 167 lines the (2R)-2-phosphoglycerate pocket. Catalysis depends on glutamate 209, which acts as the Proton donor. Mg(2+) contacts are provided by aspartate 246, glutamate 291, and aspartate 318. Residues lysine 343, arginine 372, serine 373, and lysine 394 each coordinate (2R)-2-phosphoglycerate. The Proton acceptor role is filled by lysine 343.

Belongs to the enolase family. As to quaternary structure, component of the RNA degradosome, a multiprotein complex involved in RNA processing and mRNA degradation. It depends on Mg(2+) as a cofactor.

It localises to the cytoplasm. Its subcellular location is the secreted. It is found in the cell surface. The catalysed reaction is (2R)-2-phosphoglycerate = phosphoenolpyruvate + H2O. It participates in carbohydrate degradation; glycolysis; pyruvate from D-glyceraldehyde 3-phosphate: step 4/5. Its function is as follows. Catalyzes the reversible conversion of 2-phosphoglycerate (2-PG) into phosphoenolpyruvate (PEP). It is essential for the degradation of carbohydrates via glycolysis. This Haemophilus influenzae (strain ATCC 51907 / DSM 11121 / KW20 / Rd) protein is Enolase.